Consider the following 533-residue polypeptide: Probable protein kinase UbiB (533 aa).

A helical membrane pass occupies residues 24–44 (LILELPMLPWWLRLLGATLPW). Residues 126 to 494 (RFEREPLASA…WKGSRHDWLG (369 aa)) enclose the Protein kinase domain. ATP contacts are provided by residues 132–140 (LASASVAQV) and lysine 154. Residue aspartate 289 is the Proton acceptor of the active site. The chain crosses the membrane as a helical span at residues 510–530 (LGQQLEAWPAWVMLAGGVFLI).

The protein belongs to the ABC1 family. UbiB subfamily.

The protein localises to the cell inner membrane. It participates in cofactor biosynthesis; ubiquinone biosynthesis [regulation]. Its function is as follows. Is probably a protein kinase regulator of UbiI activity which is involved in aerobic coenzyme Q (ubiquinone) biosynthesis. This is Probable protein kinase UbiB from Pseudomonas aeruginosa (strain ATCC 15692 / DSM 22644 / CIP 104116 / JCM 14847 / LMG 12228 / 1C / PRS 101 / PAO1).